The primary structure comprises 887 residues: Degenerin-like protein unc-105 (887 aa).

The segment at 1–33 is disordered; sequence MAEDRIKSKLRRPASIESTMSSRTKPRHKPSPM. Topologically, residues 1 to 93 are cytoplasmic; it reads MAEDRIKSKL…AATADGKWRW (93 aa). Residues 94–114 traverse the membrane as a helical segment; sequence FWYTAFTICLLALLIQIFFLI. Topologically, residues 115-698 are extracellular; sequence SKYRQYGKTV…SVLADLGGLT (584 aa). N-linked (GlcNAc...) asparagine glycans are attached at residues Asn-244, Asn-450, Asn-473, Asn-581, and Asn-599. A helical membrane pass occupies residues 699-719; that stretch reads GLWIGASVVSLLEIVTLIVFA. At 720-887 the chain is on the cytoplasmic side; that stretch reads TQAYVRKRKG…YSAPYEHRKK (168 aa). Disordered regions lie at residues 794 to 815 and 859 to 887; these read AIQE…NGSC and SNSE…HRKK.

This sequence belongs to the amiloride-sensitive sodium channel (TC 1.A.6) family. As to expression, expressed in body wall muscle.

It localises to the membrane. Its function is as follows. Ion channel which is permeable to small monovalent cations. Shown not to be H+-ion gated. May be mechanosensitive and is required for growth and muscle development. This chain is Degenerin-like protein unc-105 (unc-105), found in Caenorhabditis elegans.